The following is a 568-amino-acid chain: Protein downstream neighbor of son homolog (568 aa).

Disordered regions lie at residues Asn-28–Glu-48 and Met-311–Glu-355. The segment covering Ser-315–Leu-335 has biased composition (polar residues).

Belongs to the DONSON family. As to expression, expression peaks during late G1 and S phase (at protein level).

The protein resides in the nucleus. Functionally, essential for DNA amplification in the ovary and required for cell proliferation during development. The protein is Protein downstream neighbor of son homolog (hd) of Drosophila melanogaster (Fruit fly).